Reading from the N-terminus, the 419-residue chain is Effector protein BipC (419 aa).

2 disordered regions span residues 62–91 (VAGSGAQRVELARPKPDAQTRATDRRTVSG) and 338–402 (LQSG…AKSQ). 2 stretches are compositionally biased toward basic and acidic residues: residues 71–91 (ELARPKPDAQTRATDRRTVSG) and 380–392 (TRDEAAHRSREAA).

This sequence belongs to the SctB/SipC family.

It is found in the secreted. In Burkholderia mallei (strain NCTC 10247), this protein is Effector protein BipC (bipC).